The sequence spans 104 residues: uncharacterized protein (104 aa).

The protein to M.jannaschii MJ1511.

This is an uncharacterized protein from Methanocaldococcus jannaschii (strain ATCC 43067 / DSM 2661 / JAL-1 / JCM 10045 / NBRC 100440) (Methanococcus jannaschii).